We begin with the raw amino-acid sequence, 399 residues long: Phosphoglycerate kinase (399 aa).

Residues 22-24 (DFN), R37, 60-63 (HFGR), R118, and R151 contribute to the substrate site. ATP-binding positions include K201, E322, and 352-355 (GGDS).

The protein belongs to the phosphoglycerate kinase family. As to quaternary structure, monomer.

The protein resides in the cytoplasm. It carries out the reaction (2R)-3-phosphoglycerate + ATP = (2R)-3-phospho-glyceroyl phosphate + ADP. It functions in the pathway carbohydrate degradation; glycolysis; pyruvate from D-glyceraldehyde 3-phosphate: step 2/5. The protein is Phosphoglycerate kinase of Wolbachia sp. subsp. Brugia malayi (strain TRS).